Reading from the N-terminus, the 123-residue chain is Small ribosomal subunit protein uS13 (123 aa).

A disordered region spans residues 97–123 (PVRGQRTHTNAKTRKGRSKLPVAAKKK).

It belongs to the universal ribosomal protein uS13 family. Part of the 30S ribosomal subunit. Forms a loose heterodimer with protein S19. Forms two bridges to the 50S subunit in the 70S ribosome.

In terms of biological role, located at the top of the head of the 30S subunit, it contacts several helices of the 16S rRNA. In the 70S ribosome it contacts the 23S rRNA (bridge B1a) and protein L5 of the 50S subunit (bridge B1b), connecting the 2 subunits; these bridges are implicated in subunit movement. Contacts the tRNAs in the A and P-sites. The chain is Small ribosomal subunit protein uS13 from Ehrlichia chaffeensis (strain ATCC CRL-10679 / Arkansas).